The following is a 782-amino-acid chain: Coiled-coil alpha-helical rod protein 1 (782 aa).

2 stretches are compositionally biased toward basic and acidic residues: residues 62 to 74 (ERDV…EPGR) and 208 to 218 (ETRRAGEAKEL). Disordered stretches follow at residues 62–82 (ERDV…WGLE) and 185–218 (AHKE…AKEL). Coiled-coil stretches lie at residues 82–314 (EGSQ…ELTR), 344–398 (LMVQ…EVER), and 498–691 (VTDV…QQEG).

It localises to the cytoplasm. It is found in the nucleus. Its function is as follows. May be a regulator of keratinocyte proliferation or differentiation. This chain is Coiled-coil alpha-helical rod protein 1 (CCHCR1), found in Gorilla gorilla gorilla (Western lowland gorilla).